A 305-amino-acid chain; its full sequence is Sulfate adenylyltransferase subunit 2 (305 aa).

Belongs to the PAPS reductase family. CysD subfamily. In terms of assembly, heterodimer composed of CysD, the smaller subunit, and CysN.

It catalyses the reaction sulfate + ATP + H(+) = adenosine 5'-phosphosulfate + diphosphate. The protein operates within sulfur metabolism; hydrogen sulfide biosynthesis; sulfite from sulfate: step 1/3. In terms of biological role, with CysN forms the ATP sulfurylase (ATPS) that catalyzes the adenylation of sulfate producing adenosine 5'-phosphosulfate (APS) and diphosphate, the first enzymatic step in sulfur assimilation pathway. APS synthesis involves the formation of a high-energy phosphoric-sulfuric acid anhydride bond driven by GTP hydrolysis by CysN coupled to ATP hydrolysis by CysD. The sequence is that of Sulfate adenylyltransferase subunit 2 from Ectopseudomonas mendocina (strain ymp) (Pseudomonas mendocina).